Consider the following 304-residue polypeptide: Cell surface-binding protein OPG105 (304 aa).

Residues Met-1–Gly-235 form the Alpha-carbonic anhydrase domain. Topologically, residues Met-1–Thr-275 are virion surface. Residues Phe-276–Met-294 form a helical membrane-spanning segment. The Intravirion portion of the chain corresponds to Ser-295 to Asn-304.

Belongs to the alpha-carbonic anhydrase family. As to quaternary structure, homodimer; disulfide-linked. In terms of processing, apparently non-glycosylated.

Its subcellular location is the virion membrane. Its function is as follows. Binds to chondroitin sulfate on the cell surface to provide virion attachment to target cell. The protein is Cell surface-binding protein OPG105 (OPG105) of Monkeypox virus (strain Zaire-96-I-16) (MPX).